A 664-amino-acid polypeptide reads, in one-letter code: Intraflagellar transport protein 70B (664 aa).

7 TPR repeats span residues 11-44 (DGEF…SSRS), 45-78 (RAGL…HPEL), 153-186 (YDGQ…SGYQ), 188-220 (DLSY…GIRQ), 385-418 (LTEQ…YDET), 423-456 (IPVL…CNDH), and 458-491 (VWKL…NYDN). The stretch at 507–534 (YIMTSQNEEAEELMRKIEKEEEQLSYGD) forms a coiled coil. A TPR 8 repeat occupies 543–576 (CIVNLVIGTLYCAKGNYDFGISRVIKSLEPYHKK).

This sequence belongs to the TTC30/dfy-1/fleer family. As to quaternary structure, interacts with the IFT B complex components IFT27, IFT46, IFT74, IFT52, IFT57, IFT80, IFT81 and IFT88. Interacts with KIF17.

It is found in the cell projection. It localises to the cilium. Functionally, required for polyglutamylation of axonemal tubulin. Plays a role in anterograde intraflagellar transport (IFT), the process by which cilia precursors are transported from the base of the cilium to the site of their incorporation at the tip. This is Intraflagellar transport protein 70B (Ift70b) from Mus musculus (Mouse).